The chain runs to 86 residues: Apolipoprotein C-I (86 aa).

Positions 1–26 (MRLFLSLPVLVVVLLMILEGPGPAQG) are cleaved as a signal peptide.

This sequence belongs to the apolipoprotein C1 family.

The protein localises to the secreted. In terms of biological role, inhibitor of lipoprotein binding to the low density lipoprotein (LDL) receptor, LDL receptor-related protein, and very low density lipoprotein (VLDL) receptor. Associates with high density lipoproteins (HDL) and the triacylglycerol-rich lipoproteins in the plasma and makes up about 10% of the protein of the VLDL and 2% of that of HDL. Appears to interfere directly with fatty acid uptake and is also the major plasma inhibitor of cholesteryl ester transfer protein (CETP). Binds free fatty acids and reduces their intracellular esterification. Modulates the interaction of APOE with beta-migrating VLDL and inhibits binding of beta-VLDL to the LDL receptor-related protein. The chain is Apolipoprotein C-I (APOC1) from Saimiri boliviensis boliviensis (Bolivian squirrel monkey).